The chain runs to 256 residues: Pimeloyl-[acyl-carrier protein] methyl ester esterase (256 aa).

Positions 15–242 (HLVLLHGWGL…AAHAPFISHP (228 aa)) constitute an AB hydrolase-1 domain. Substrate is bound by residues W22, 82 to 83 (SL), and 143 to 147 (FLALQ). Residue S82 is the Nucleophile of the active site. Residues D207 and H235 contribute to the active site. Residue H235 participates in substrate binding.

This sequence belongs to the AB hydrolase superfamily. Carboxylesterase BioH family. In terms of assembly, monomer.

It is found in the cytoplasm. The enzyme catalyses 6-carboxyhexanoyl-[ACP] methyl ester + H2O = 6-carboxyhexanoyl-[ACP] + methanol + H(+). It participates in cofactor biosynthesis; biotin biosynthesis. In terms of biological role, the physiological role of BioH is to remove the methyl group introduced by BioC when the pimeloyl moiety is complete. It allows to synthesize pimeloyl-ACP via the fatty acid synthetic pathway through the hydrolysis of the ester bonds of pimeloyl-ACP esters. This chain is Pimeloyl-[acyl-carrier protein] methyl ester esterase, found in Escherichia coli O45:K1 (strain S88 / ExPEC).